The chain runs to 151 residues: 3-hydroxyacyl-[acyl-carrier-protein] dehydratase FabZ (151 aa).

Residue histidine 54 is part of the active site.

The protein belongs to the thioester dehydratase family. FabZ subfamily. In terms of assembly, oligomer. Post-translationally, the N-terminus is blocked.

The protein resides in the cytoplasm. It carries out the reaction a (3R)-hydroxyacyl-[ACP] = a (2E)-enoyl-[ACP] + H2O. Functionally, involved in unsaturated fatty acids biosynthesis. Catalyzes the dehydration of short chain beta-hydroxyacyl-ACPs and long chain saturated and unsaturated beta-hydroxyacyl-ACPs. The protein is 3-hydroxyacyl-[acyl-carrier-protein] dehydratase FabZ of Escherichia coli O9:H4 (strain HS).